We begin with the raw amino-acid sequence, 262 residues long: Aminoglycoside (3'') (9) adenylyltransferase (262 aa).

An adenylyltransferase domain region spans residues 1 to 157 (MTLSIPPSIQ…ERAERLFTPA (157 aa)). Residues S36, S46, and D47 each contribute to the ATP site. Residues D47, D49, and E87 each coordinate Mg(2+). E87 functions as the Proton acceptor in the catalytic mechanism. D130 is an ATP binding site. The tract at residues 158–262 (PAAQLLKALR…AKAHIPTQFT (105 aa)) is helical domain. Streptomycin contacts are provided by residues 173–178 (WQSTAD) and H185. Residues K205 and Y231 each coordinate ATP.

In terms of assembly, monomer.

The enzyme catalyses streptomycin + ATP = 3''-O-adenylylstreptomycin + diphosphate. The catalysed reaction is spectinomycin + ATP = 9-O-adenylylspectinomycin + diphosphate. Its function is as follows. Mediates bacterial resistance to the antibiotics streptomycin and spectinomycin, does not confer resistance to kanamycin. Binds ATP first, then antibiotic. The polypeptide is Aminoglycoside (3'') (9) adenylyltransferase (aadA) (Salmonella typhimurium (strain LT2 / SGSC1412 / ATCC 700720)).